We begin with the raw amino-acid sequence, 296 residues long: 4-hydroxybenzoate octaprenyltransferase (296 aa).

Transmembrane regions (helical) follow at residues 28-48 (PIGI…AGKG), 52-72 (LKTV…GCVI), 102-122 (ALAL…FTNA), 146-166 (YYPQ…AFTA), 169-189 (GDLP…TVGY), 219-239 (VIIL…GARF), 241-261 (LGAC…WEFW), and 275-295 (FLHN…DYAV).

It belongs to the UbiA prenyltransferase family. Mg(2+) is required as a cofactor.

Its subcellular location is the cell inner membrane. It carries out the reaction all-trans-octaprenyl diphosphate + 4-hydroxybenzoate = 4-hydroxy-3-(all-trans-octaprenyl)benzoate + diphosphate. The protein operates within cofactor biosynthesis; ubiquinone biosynthesis. Its function is as follows. Catalyzes the prenylation of para-hydroxybenzoate (PHB) with an all-trans polyprenyl group. Mediates the second step in the final reaction sequence of ubiquinone-8 (UQ-8) biosynthesis, which is the condensation of the polyisoprenoid side chain with PHB, generating the first membrane-bound Q intermediate 3-octaprenyl-4-hydroxybenzoate. This chain is 4-hydroxybenzoate octaprenyltransferase, found in Pseudomonas savastanoi pv. phaseolicola (strain 1448A / Race 6) (Pseudomonas syringae pv. phaseolicola (strain 1448A / Race 6)).